The primary structure comprises 309 residues: Acetolactate synthase small subunit, mitochondrial (309 aa).

The transit peptide at 1–24 directs the protein to the mitochondrion; the sequence is MLRSLLQSGHRRVVASSCATMVRC. One can recognise an ACT domain in the interval 79-159; that stretch reads VLNCLVQNEP…DYTNSEIIKR (81 aa).

It belongs to the acetolactate synthase small subunit family. The acetolactate synthase complex contains the catalytic regulatory subunit ILV2 and the regulatory small subunit ILV6.

The protein localises to the mitochondrion. It functions in the pathway amino-acid biosynthesis; L-isoleucine biosynthesis; L-isoleucine from 2-oxobutanoate: step 1/4. The protein operates within amino-acid biosynthesis; L-valine biosynthesis; L-valine from pyruvate: step 1/4. In terms of biological role, regulatory subunit of mitochondrial acetolactate synthase, which catalyzes the first of a series of common steps in the biosynthesis of the branched-chain amino acids. Stimulates activity of the acetolactate synthase catalytic subunit ILV2 seven- to tenfold and confers sensitivity to inhibition by valine and activation by ATP. The sequence is that of Acetolactate synthase small subunit, mitochondrial (ILV6) from Saccharomyces cerevisiae (strain ATCC 204508 / S288c) (Baker's yeast).